The chain runs to 474 residues: ATP synthase subunit beta (474 aa).

G153–T160 is a binding site for ATP.

The protein belongs to the ATPase alpha/beta chains family. In terms of assembly, F-type ATPases have 2 components, CF(1) - the catalytic core - and CF(0) - the membrane proton channel. CF(1) has five subunits: alpha(3), beta(3), gamma(1), delta(1), epsilon(1). CF(0) has three main subunits: a(1), b(2) and c(9-12). The alpha and beta chains form an alternating ring which encloses part of the gamma chain. CF(1) is attached to CF(0) by a central stalk formed by the gamma and epsilon chains, while a peripheral stalk is formed by the delta and b chains.

It localises to the cell inner membrane. The enzyme catalyses ATP + H2O + 4 H(+)(in) = ADP + phosphate + 5 H(+)(out). Functionally, produces ATP from ADP in the presence of a proton gradient across the membrane. The catalytic sites are hosted primarily by the beta subunits. In Neorickettsia sennetsu (strain ATCC VR-367 / Miyayama) (Ehrlichia sennetsu), this protein is ATP synthase subunit beta.